A 586-amino-acid chain; its full sequence is Arginine--tRNA ligase (586 aa).

Positions 131-141 (ANPTGPLHVGH) match the 'HIGH' region motif.

The protein belongs to the class-I aminoacyl-tRNA synthetase family. Monomer.

Its subcellular location is the cytoplasm. The catalysed reaction is tRNA(Arg) + L-arginine + ATP = L-arginyl-tRNA(Arg) + AMP + diphosphate. The polypeptide is Arginine--tRNA ligase (Nitrosomonas eutropha (strain DSM 101675 / C91 / Nm57)).